The chain runs to 173 residues: T-complex protein 1 subunit alpha (173 aa).

It belongs to the TCP-1 chaperonin family. In terms of assembly, component of the chaperonin-containing T-complex (TRiC), a heterooligomeric complex of about 850 to 900 kDa that forms two stacked rings, 12 to 16 nm in diameter.

It is found in the cytoplasm. The protein resides in the cytosol. Component of the chaperonin-containing T-complex (TRiC), a molecular chaperone complex that assists the folding of proteins upon ATP hydrolysis. The polypeptide is T-complex protein 1 subunit alpha (Ambystoma mexicanum (Axolotl)).